The primary structure comprises 217 residues: Thymidylate kinase (217 aa).

An ATP-binding site is contributed by 7-14; the sequence is GIEGTGKT.

The protein belongs to the thymidylate kinase family.

The enzyme catalyses dTMP + ATP = dTDP + ADP. Phosphorylation of dTMP to form dTDP in both de novo and salvage pathways of dTTP synthesis. This chain is Thymidylate kinase, found in Maridesulfovibrio salexigens (strain ATCC 14822 / DSM 2638 / NCIMB 8403 / VKM B-1763) (Desulfovibrio salexigens).